The following is a 541-amino-acid chain: Amino-acid permease 2 (541 aa).

Polar residues predominate over residues 1 to 22 (MSFSPPNKSADATIQITEMTRQ). Positions 1-43 (MSFSPPNKSADATIQITEMTRQGTPSSGEAAASTPSTSSTESG) are disordered. Low complexity predominate over residues 23 to 41 (GTPSSGEAAASTPSTSSTE). Transmembrane regions (helical) follow at residues 66–86 (FSFAMSISGVYGTLMSTWIYG), 90–110 (GGAAAIMWSWIIGGAGGWALA), 139–159 (VPFLCWIAGYLNLVGTVAGGA), 188–208 (VVGVMIGLTTIHAMINTLPTA), 214–234 (TSGYVVFHISVLLGACVTLLV), 255–275 (GWSPPGFAFLFGCLTPAWIMT), 301–321 (ATTFTYVIGFFFNLVLVVCMG), 347–367 (PAIFFTLCGFGVMNLVAIPGI), 399–419 (PLIAVWTYAVLEIIINLLGLA), 424–444 (IGAVFNVCTVALNVSYVIPII), 464–484 (VWVNAFAVAWNTFMAVIFFFP), and 496–516 (YAIVVFFFVLIFALVFWYTHG).

It belongs to the amino acid-polyamine-organocation (APC) superfamily.

It localises to the membrane. This Neurospora crassa (strain ATCC 24698 / 74-OR23-1A / CBS 708.71 / DSM 1257 / FGSC 987) protein is Amino-acid permease 2 (aap-2).